The following is a 476-amino-acid chain: Cytochrome c oxidase subunit 1 (476 aa).

The chain crosses the membrane as a helical span at residues 19-39; it reads LYYLWFSFLFGTYGFLLSVIL. Position 42 (E42) interacts with Ca(2+). The next 8 helical transmembrane spans lie at 61 to 81, 105 to 125, 144 to 164, 194 to 214, 240 to 260, 278 to 298, 309 to 329, and 345 to 365; these read MIFTIHGIIMIFFNIMPGLFG, ISLLLQPIAFILVILSTAAEF, LSPVAVDVIIIGLLVSGIASI, IIITSIMLLLTLPVLTGGVLM, LFWFFGHPEVYILILPAFGVI, MILAMGCIAVLGSVVWVHHMY, FFTSTTILISIPTGTKVFNWL, and LLCLLFICTFTFGGTTGVILG. H66 contributes to the Fe(II)-heme a binding site. H246 provides a ligand contact to Cu cation. Positions 246–250 form a cross-link, 1'-histidyl-3'-tyrosine (His-Tyr); the sequence is HPEVY. Residue Y250 coordinates O2. Residues H295 and H296 each contribute to the Cu cation site. Positions 374 and 375 each coordinate Mg(2+). 2 helical membrane-spanning segments follow: residues 379-399 and 415-435; these read VIAHFHFVLSIGAIIALFTCV and TLIVLWSILFFIGVILTFLPM. H382 contacts heme a3. Position 384 (H384) interacts with Fe(II)-heme a. Position 448 (P448) interacts with Ca(2+). The chain crosses the membrane as a helical span at residues 455–475; sequence NGWNMICSIGSTMTLFGLLIF.

The protein belongs to the heme-copper respiratory oxidase family. In terms of assembly, component of the cytochrome c oxidase (complex IV, CIV), a multisubunit enzyme composed of a catalytic core of 3 subunits and several supernumerary subunits. The complex exists as a monomer or a dimer and forms supercomplexes (SCs) in the inner mitochondrial membrane with ubiquinol-cytochrome c oxidoreductase (cytochrome b-c1 complex, complex III, CIII). Requires heme as cofactor. Cu cation is required as a cofactor.

The protein localises to the mitochondrion inner membrane. The enzyme catalyses 4 Fe(II)-[cytochrome c] + O2 + 8 H(+)(in) = 4 Fe(III)-[cytochrome c] + 2 H2O + 4 H(+)(out). Its pathway is energy metabolism; oxidative phosphorylation. Functionally, component of the cytochrome c oxidase, the last enzyme in the mitochondrial electron transport chain which drives oxidative phosphorylation. The respiratory chain contains 3 multisubunit complexes succinate dehydrogenase (complex II, CII), ubiquinol-cytochrome c oxidoreductase (cytochrome b-c1 complex, complex III, CIII) and cytochrome c oxidase (complex IV, CIV), that cooperate to transfer electrons derived from NADH and succinate to molecular oxygen, creating an electrochemical gradient over the inner membrane that drives transmembrane transport and the ATP synthase. Cytochrome c oxidase is the component of the respiratory chain that catalyzes the reduction of oxygen to water. Electrons originating from reduced cytochrome c in the intermembrane space (IMS) are transferred via the dinuclear copper A center (CU(A)) of subunit 2 and heme A of subunit 1 to the active site in subunit 1, a binuclear center (BNC) formed by heme A3 and copper B (CU(B)). The BNC reduces molecular oxygen to 2 water molecules using 4 electrons from cytochrome c in the IMS and 4 protons from the mitochondrial matrix. In Plasmodium berghei, this protein is Cytochrome c oxidase subunit 1 (COI).